Here is a 540-residue protein sequence, read N- to C-terminus: Na(+)/H(+) antiporter NhaS2 (540 aa).

10 helical membrane passes run 29-49 (ITTLVENLIILLLVATLVALV), 71-91 (GLSVGLNPELILNFFLPILIF), 117-137 (VVISAAITAVLLKIGLGLAWV), 138-158 (TAAGVSVILTITDTVSVIAAF), 207-227 (IFVAFVGGGLVGLGLGYLCVG), 256-276 (LGVSSAIAVVVAGLVIGNLAL), 296-316 (FGVNTLIFLLVGIEVYPSILL), 323-343 (LIAIVAYQIGRVFSIYPLLYL), 358-378 (VLIAGNVKGSLSMALALALPL), and 389-409 (LVFSTVMVSLIGQGLSLPWVV).

The protein belongs to the monovalent cation:proton antiporter 1 (CPA1) transporter (TC 2.A.36) family.

It is found in the cell membrane. Required for Na(+) uptake into the cell, especially at low external Na(+) concentrations or low Na(+)/K(+) ratios. May be part of a sodium cycle that permits re-entry of sodium into the cell. In Synechocystis sp. (strain ATCC 27184 / PCC 6803 / Kazusa), this protein is Na(+)/H(+) antiporter NhaS2 (nhaS2).